Here is a 264-residue protein sequence, read N- to C-terminus: MSNILTKILARKVEEIAERLLHVSQAELVARCADLPTPRGFAAALQATIVHGDPAVIAEIKKASPSKGVLREDFRPAEIAISYELGGASCLSVLTDVHFFKGHDNYLSQARDACTLPVLRKDFTIDPYQVYEARVLGADCILLIVAALDDAQLVDLSGLALQLGMDVLVEVHDIDELERAIQISAPLIGINNRNLSTFNVSLETTLTMKGLVPRDRLLVSESGILTSADVQRLRAAGVNAFLVGEAFMRAAEPGESLREMFFIT.

Belongs to the TrpC family.

It carries out the reaction 1-(2-carboxyphenylamino)-1-deoxy-D-ribulose 5-phosphate + H(+) = (1S,2R)-1-C-(indol-3-yl)glycerol 3-phosphate + CO2 + H2O. The protein operates within amino-acid biosynthesis; L-tryptophan biosynthesis; L-tryptophan from chorismate: step 4/5. The polypeptide is Indole-3-glycerol phosphate synthase (Xylella fastidiosa (strain M12)).